Consider the following 289-residue polypeptide: Diaminopimelate epimerase (289 aa).

Substrate is bound by residues Asn17, Gln47, and Asn67. The active-site Proton donor is the Cys76. Substrate is bound by residues 77–78, Asn164, Asn198, and 216–217; these read GN and ER. Residue Cys225 is the Proton acceptor of the active site. 226–227 lines the substrate pocket; the sequence is GS.

It belongs to the diaminopimelate epimerase family. As to quaternary structure, homodimer.

Its subcellular location is the cytoplasm. The enzyme catalyses (2S,6S)-2,6-diaminopimelate = meso-2,6-diaminopimelate. It participates in amino-acid biosynthesis; L-lysine biosynthesis via DAP pathway; DL-2,6-diaminopimelate from LL-2,6-diaminopimelate: step 1/1. Catalyzes the stereoinversion of LL-2,6-diaminopimelate (L,L-DAP) to meso-diaminopimelate (meso-DAP), a precursor of L-lysine and an essential component of the bacterial peptidoglycan. The protein is Diaminopimelate epimerase of Bradyrhizobium sp. (strain BTAi1 / ATCC BAA-1182).